A 188-amino-acid chain; its full sequence is Probable DNA-directed RNA polymerase subunit delta (188 aa).

Positions 14-81 (LSMIEVAHAL…GNNVWALRSW (68 aa)) constitute an HTH HARE-type domain. The tract at residues 96 to 188 (EIEDEEEEEK…EDDSDDTDED (93 aa)) is disordered. Acidic residues-rich tracts occupy residues 118–150 (IEDE…EDKD) and 158–188 (ELAE…TDED).

Belongs to the RpoE family. In terms of assembly, RNAP is composed of a core of 2 alpha, a beta and a beta' subunits. The core is associated with a delta subunit and one of several sigma factors.

Functionally, participates in both the initiation and recycling phases of transcription. In the presence of the delta subunit, RNAP displays an increased specificity of transcription, a decreased affinity for nucleic acids, and an increased efficiency of RNA synthesis because of enhanced recycling. This is Probable DNA-directed RNA polymerase subunit delta from Lactococcus lactis subsp. cremoris (strain MG1363).